We begin with the raw amino-acid sequence, 80 residues long: Defensin-like protein 17 (80 aa).

The first 29 residues, 1–29, serve as a signal peptide directing secretion; it reads MAKSATIITFLFAALVLFAAFEAPTMVEA. Gln-30 bears the Pyrrolidone carboxylic acid mark. 4 disulfide bridges follow: Cys-33/Cys-80, Cys-44/Cys-65, Cys-50/Cys-74, and Cys-54/Cys-76.

Belongs to the DEFL family.

The protein localises to the secreted. In terms of biological role, confers broad-spectrum resistance to pathogens. This chain is Defensin-like protein 17 (PDF1.2C), found in Arabidopsis thaliana (Mouse-ear cress).